Here is a 280-residue protein sequence, read N- to C-terminus: DegV domain-containing protein SPy_1698/M5005_Spy1391 (280 aa).

Residues 3–280 form the DegV domain; that stretch reads WKIVTDSGCD…DGGLLMGYEI (278 aa). The hexadecanoate site is built by serine 63 and serine 91.

Functionally, may bind long-chain fatty acids, such as palmitate, and may play a role in lipid transport or fatty acid metabolism. The sequence is that of DegV domain-containing protein SPy_1698/M5005_Spy1391 from Streptococcus pyogenes serotype M1.